Consider the following 230-residue polypeptide: Acyl-protein thioesterase 1 (230 aa).

Residues Ser-119, Asp-174, and His-208 each act as charge relay system in the active site. At Lys-224 the chain carries N6-acetyllysine.

Belongs to the AB hydrolase superfamily. AB hydrolase 2 family. Homodimer. Platelets.

It localises to the cytoplasm. The protein localises to the cell membrane. Its subcellular location is the nucleus membrane. It is found in the endoplasmic reticulum. The catalysed reaction is S-hexadecanoyl-L-cysteinyl-[protein] + H2O = L-cysteinyl-[protein] + hexadecanoate + H(+). The enzyme catalyses 1-hexadecanoyl-sn-glycero-3-phosphocholine + H2O = sn-glycerol 3-phosphocholine + hexadecanoate + H(+). It catalyses the reaction a 1-(9Z-octadecenoyl)-2-acyl-sn-glycero-3-phosphocholine + H2O = a 2-acyl-sn-glycero-3-phosphocholine + (9Z)-octadecenoate + H(+). Its activity is regulated as follows. Inhibited by palmostatin-B, leading to impair depalmitoylating of Ras. Functionally, acts as an acyl-protein thioesterase. Hydrolyzes fatty acids from S-acylated cysteine residues in proteins such as trimeric G alpha proteins or HRAS. Acts as a palmitoyl thioesterase that catalyzes depalmitoylation of proteins, such as ADRB2, KCNMA1 and SQSTM1. Acts as a negative regulator of autophagy by mediating palmitoylation of SQSTM1, decreasing affinity between SQSTM1 and ATG8 proteins and recruitment of ubiquitinated cargo proteins to autophagosomes. Acts as a lysophospholipase and hydrolyzes lysophosphatidylcholine (lyso-PC). Also hydrolyzes lysophosphatidylethanolamine (lyso-PE), lysophosphatidylinositol (lyso-PI) and lysophosphatidylserine (lyso-PS). Has much higher thioesterase activity than lysophospholipase activity. Contributes to the production of lysophosphatidic acid (LPA) during blood coagulation by recognizing and cleaving plasma phospholipids to generate lysophospholipids which in turn act as substrates for ENPP2 to produce LPA. The chain is Acyl-protein thioesterase 1 (LYPLA1) from Homo sapiens (Human).